The chain runs to 779 residues: Phosphoribosylformylglycinamidine synthase subunit PurL (779 aa).

The active site involves H52. ATP-binding residues include Y55 and K94. Residue E96 coordinates Mg(2+). Substrate-binding positions include S97 to H100 and R119. H98 serves as the catalytic Proton acceptor. Position 120 (D120) interacts with Mg(2+). Q243 provides a ligand contact to substrate. A Mg(2+)-binding site is contributed by D271. E315–Q317 contributes to the substrate binding site. Residues N523 and G560 each contribute to the ATP site. N561 is a Mg(2+) binding site. S563 provides a ligand contact to substrate.

It belongs to the FGAMS family. In terms of assembly, monomer. Part of the FGAM synthase complex composed of 1 PurL, 1 PurQ and 2 PurS subunits.

The protein localises to the cytoplasm. The enzyme catalyses N(2)-formyl-N(1)-(5-phospho-beta-D-ribosyl)glycinamide + L-glutamine + ATP + H2O = 2-formamido-N(1)-(5-O-phospho-beta-D-ribosyl)acetamidine + L-glutamate + ADP + phosphate + H(+). Its pathway is purine metabolism; IMP biosynthesis via de novo pathway; 5-amino-1-(5-phospho-D-ribosyl)imidazole from N(2)-formyl-N(1)-(5-phospho-D-ribosyl)glycinamide: step 1/2. Its function is as follows. Part of the phosphoribosylformylglycinamidine synthase complex involved in the purines biosynthetic pathway. Catalyzes the ATP-dependent conversion of formylglycinamide ribonucleotide (FGAR) and glutamine to yield formylglycinamidine ribonucleotide (FGAM) and glutamate. The FGAM synthase complex is composed of three subunits. PurQ produces an ammonia molecule by converting glutamine to glutamate. PurL transfers the ammonia molecule to FGAR to form FGAM in an ATP-dependent manner. PurS interacts with PurQ and PurL and is thought to assist in the transfer of the ammonia molecule from PurQ to PurL. The protein is Phosphoribosylformylglycinamidine synthase subunit PurL of Prochlorococcus marinus (strain MIT 9301).